The chain runs to 200 residues: NADH-quinone oxidoreductase subunit C (200 aa).

It belongs to the complex I 30 kDa subunit family. As to quaternary structure, NDH-1 is composed of 14 different subunits. Subunits NuoB, C, D, E, F, and G constitute the peripheral sector of the complex.

Its subcellular location is the cell inner membrane. The enzyme catalyses a quinone + NADH + 5 H(+)(in) = a quinol + NAD(+) + 4 H(+)(out). NDH-1 shuttles electrons from NADH, via FMN and iron-sulfur (Fe-S) centers, to quinones in the respiratory chain. The immediate electron acceptor for the enzyme in this species is believed to be ubiquinone. Couples the redox reaction to proton translocation (for every two electrons transferred, four hydrogen ions are translocated across the cytoplasmic membrane), and thus conserves the redox energy in a proton gradient. The sequence is that of NADH-quinone oxidoreductase subunit C from Burkholderia mallei (strain NCTC 10247).